Here is a 736-residue protein sequence, read N- to C-terminus: 3',5'-cyclic-AMP phosphodiesterase 4B (736 aa).

2 disordered regions span residues 51–77 (QLPP…PTTL) and 96–116 (DVEN…SSSS). Phosphoserine is present on S56. S290 carries the phosphoserine modification. The PDEase domain occupies 330 to 659 (VNTENEDHLA…NWYQSMIPQS (330 aa)). H406 functions as the Proton donor in the catalytic mechanism. H406 contributes to the 3',5'-cyclic AMP binding site. The AMP site is built by H406 and H410. The Zn(2+) site is built by H410, H446, D447, and D564. AMP is bound by residues D447, D564, Q615, and F618. A Mg(2+)-binding site is contributed by D447. Residue D447 participates in Mn(2+) binding. Residues Q615 and F618 each coordinate 3',5'-cyclic AMP. Phosphoserine is present on residues S659 and S661. The disordered stretch occupies residues 685–736 (EEEDSEGPEKEGEGPNYFSSTKTLCVIDPENRDSLEETDIDIATEDKSLIDT).

This sequence belongs to the cyclic nucleotide phosphodiesterase family. PDE4 subfamily. In terms of assembly, interacts with DISC1. Zn(2+) is required as a cofactor. Mg(2+) serves as cofactor. The cofactor is Mn(2+). As to expression, widely expressed. Expressed in brain, heart, lung and liver. In terms of tissue distribution, expressed in liver and brain.

It is found in the cytoplasm. The protein resides in the cell membrane. It carries out the reaction 3',5'-cyclic AMP + H2O = AMP + H(+). It participates in purine metabolism; 3',5'-cyclic AMP degradation; AMP from 3',5'-cyclic AMP: step 1/1. Its activity is regulated as follows. Inhibited by rolipram. Functionally, hydrolyzes the second messenger cAMP, which is a key regulator of many important physiological processes. In Rattus norvegicus (Rat), this protein is 3',5'-cyclic-AMP phosphodiesterase 4B.